A 61-amino-acid polypeptide reads, in one-letter code: MAKCAICEKGPHFGNAVSHSHRRSNKVWNANVKSVKVKVNGNAKKMYVCTSCLRSGLVERA.

The protein belongs to the bacterial ribosomal protein bL28 family.

In Lachnospira eligens (strain ATCC 27750 / DSM 3376 / VPI C15-48 / C15-B4) (Eubacterium eligens), this protein is Large ribosomal subunit protein bL28.